A 546-amino-acid chain; its full sequence is Amidophosphoribosyltransferase (546 aa).

The span at 1–26 (MSAPQQQQQSQQKQQQHVRVVEQQQV) shows a compositional bias: low complexity. Positions 1–39 (MSAPQQQQQSQQKQQQHVRVVEQQQVEPAEAVTSSMESE) are disordered. Residues 1–53 (MSAPQQQQQSQQKQQQHVRVVEQQQVEPAEAVTSSMESESISASKELTGLTHE) constitute a propeptide that is removed on maturation. Cysteine 54 (nucleophile) is an active-site residue. Positions 54–302 (CGVFGAIACG…PGEIVELSRS (249 aa)) constitute a Glutamine amidotransferase type-2 domain. Serine 113 is subject to Phosphoserine. A Phosphothreonine modification is found at threonine 114. Residue serine 120 is modified to Phosphoserine. Cysteine 321 contacts [4Fe-4S] cluster. Residues serine 368, aspartate 430, and aspartate 431 each contribute to the Mg(2+) site. [4Fe-4S] cluster is bound by residues cysteine 467, cysteine 528, and cysteine 531.

It in the C-terminal section; belongs to the purine/pyrimidine phosphoribosyltransferase family. Mg(2+) serves as cofactor. [4Fe-4S] cluster is required as a cofactor.

It carries out the reaction 5-phospho-beta-D-ribosylamine + L-glutamate + diphosphate = 5-phospho-alpha-D-ribose 1-diphosphate + L-glutamine + H2O. Its pathway is purine metabolism; IMP biosynthesis via de novo pathway; N(1)-(5-phospho-D-ribosyl)glycinamide from 5-phospho-alpha-D-ribose 1-diphosphate: step 1/2. Involved in the first step (and regulatory point) of the de novo biosynthesis of purine nucleotides, where it catalyzes the transfer of glutamine amide to 5-phospho-alpha-D-ribose 1-diphosphate. The protein is Amidophosphoribosyltransferase (Prat) of Drosophila melanogaster (Fruit fly).